The primary structure comprises 467 residues: Mitochondrial distribution and morphology protein 10 (467 aa).

This sequence belongs to the MDM10 family. Component of the ER-mitochondria encounter structure (ERMES) or MDM complex, composed of MMM1, MDM10, MDM12 and MDM34. Associates with the mitochondrial outer membrane sorting assembly machinery SAM(core) complex.

It localises to the mitochondrion outer membrane. In terms of biological role, component of the ERMES/MDM complex, which serves as a molecular tether to connect the endoplasmic reticulum and mitochondria. Components of this complex are involved in the control of mitochondrial shape and protein biogenesis and may function in phospholipid exchange. MDM10 is involved in the late assembly steps of the general translocase of the mitochondrial outer membrane (TOM complex). Functions in the TOM40-specific route of the assembly of outer membrane beta-barrel proteins, including the association of TOM40 with the receptor TOM22 and small TOM proteins. Can associate with the SAM(core) complex as well as the MDM12-MMM1 complex, both involved in late steps of the major beta-barrel assembly pathway, that is responsible for biogenesis of all outer membrane beta-barrel proteins. May act as a switch that shuttles between both complexes and channels precursor proteins into the TOM40-specific pathway. Plays a role in mitochondrial morphology and in the inheritance of mitochondria. This Ajellomyces capsulatus (strain G186AR / H82 / ATCC MYA-2454 / RMSCC 2432) (Darling's disease fungus) protein is Mitochondrial distribution and morphology protein 10.